The chain runs to 402 residues: Tryptophan synthase beta chain (402 aa).

The residue at position 91 (Lys91) is an N6-(pyridoxal phosphate)lysine.

The protein belongs to the TrpB family. Tetramer of two alpha and two beta chains. The cofactor is pyridoxal 5'-phosphate.

The catalysed reaction is (1S,2R)-1-C-(indol-3-yl)glycerol 3-phosphate + L-serine = D-glyceraldehyde 3-phosphate + L-tryptophan + H2O. The protein operates within amino-acid biosynthesis; L-tryptophan biosynthesis; L-tryptophan from chorismate: step 5/5. Its function is as follows. The beta subunit is responsible for the synthesis of L-tryptophan from indole and L-serine. This chain is Tryptophan synthase beta chain, found in Streptococcus thermophilus (strain ATCC BAA-250 / LMG 18311).